Consider the following 638-residue polypeptide: Intron-encoded RNA maturase bI4 (638 aa).

Residues 1–253 (MAFRKSNVYL…VFYSPNTLGQ (253 aa)) form a COB exons 1 to 4 encoded region. The segment at 253–638 (QNMALLLITY…LKFNEKWNNN (386 aa)) is COB intron 4 encoded.

It in the C-terminal section; belongs to the LAGLIDADG endonuclease family. As to quaternary structure, forms a ternary complex with intron derived RNA and the imported mitochondrial leucyl-tRNA synthetase NAM2. The proteins do not interact directly with each other. The mature protein may arise from proteolytic cleavage of an in-frame translation of COB exons 1 to 4 plus intron 4, containing the bI4 open reading frame. Cleavage would take place close to the Met-385 resulting in an active maturase of about 30 kDa.

It is found in the mitochondrion. Mitochondrial mRNA maturase required for splicing of intron 4 of the cytochrome b (COB) gene, containing its own coding sequence, and intron 4 in COX1, coding for the related homing endonuclease aI4. In vivo splicing requires in addition the imported mitochondrial leucyl-tRNA synthetase NAM2. Both proteins seem to stimulate the intrinsic ribozyme activity of intron bI4 through binding to and stabilizing specific secondary and tertiary structure elements in the RNA. This chain is Intron-encoded RNA maturase bI4 (BI4), found in Saccharomyces cerevisiae (strain ATCC 204508 / S288c) (Baker's yeast).